We begin with the raw amino-acid sequence, 355 residues long: Protein RecA (355 aa).

67–74 (GPESSGKT) is a binding site for ATP.

The protein belongs to the RecA family.

It localises to the cytoplasm. In terms of biological role, can catalyze the hydrolysis of ATP in the presence of single-stranded DNA, the ATP-dependent uptake of single-stranded DNA by duplex DNA, and the ATP-dependent hybridization of homologous single-stranded DNAs. It interacts with LexA causing its activation and leading to its autocatalytic cleavage. This is Protein RecA from Shewanella baltica (strain OS195).